Here is a 262-residue protein sequence, read N- to C-terminus: 5'-nucleotidase SurE (262 aa).

Residues Asp-11, Asp-12, Ser-43, and Asn-101 each contribute to the a divalent metal cation site.

Belongs to the SurE nucleotidase family. A divalent metal cation serves as cofactor.

It localises to the cytoplasm. It catalyses the reaction a ribonucleoside 5'-phosphate + H2O = a ribonucleoside + phosphate. In terms of biological role, nucleotidase that shows phosphatase activity on nucleoside 5'-monophosphates. The chain is 5'-nucleotidase SurE from Prochlorococcus marinus (strain NATL1A).